The primary structure comprises 315 residues: Protein sprouty homolog 2 (315 aa).

A compositionally biased stretch (polar residues) spans 1–14 (MEARAQSGSGSQPL). Disordered regions lie at residues 1–38 (MEAR…PQQV) and 51–140 (NTNE…GSSF). A compositionally biased stretch (basic and acidic residues) spans 20–32 (DSGRQRGEPDPRD). Positions 88–100 (PRQPSRPQHPPAH) are enriched in pro residues. Low complexity predominate over residues 109-140 (RSISTVSSGSRSSTRTSTSSSSSEQRLLGSSF). A required for interaction with CAV1 region spans residues 118–315 (SRSSTRTSTS…VPPRNFEKPT (198 aa)). The SPR domain occupies 177–291 (KCEDCGKCKC…CYDRVNRPGC (115 aa)). The segment at 178-315 (CEDCGKCKCK…VPPRNFEKPT (138 aa)) is required for interaction with TESK1.

It belongs to the sprouty family. In terms of assembly, forms heterodimers with SPRY1. Forms a tripartite complex containing GAB1, METTL13 and SPRY2. Within the complex interacts with METTL13. Interacts with RAF1. Interacts (via C-terminus) with TESK1 (via C-terminus); the interaction disrupts SPRY2 interaction with GRB2, potentially via disruption of SPRY2 serine dephosphorylation. Interacts with PPP2R1A/PP2A-A and PPP2CA/PP2A-C; the interaction with PPP2CA/PP2A-C is inhibited by interaction with TESK1, possibly by vesicular sequestration of SPRY2. Inhibition of the interaction with the serine/threonine-protein phosphatase 2A (PP2A) holoenzyme results in loss of PP2A-mediated dephosphorylation, resulting in the loss of SPRY2 interaction with GRB2. Interacts with GRB2. Interacts with CBL/C-CBL; the interaction inhibits CBL-mediated ubiquitination of EGFR. Interacts (via C-terminus) with CAV1 (via C-terminus). In terms of processing, cleaved at Pro-144 by the prolyl endopeptidase FAP (seprase) activity (in vitro).

The protein resides in the cytoplasm. It localises to the cytoskeleton. It is found in the cell projection. The protein localises to the ruffle membrane. Functionally, antagonist of fibroblast growth factor (FGF) pathways via inhibition of FGF-mediated phosphorylation of ERK1/2. Thereby acts as an antagonist of FGF-induced retinal lens fiber differentiation, may inhibit limb bud outgrowth and may negatively modulate respiratory organogenesis. Inhibits TGFB-induced epithelial-to-mesenchymal transition in retinal lens epithelial cells. Inhibits CBL/C-CBL-mediated EGFR ubiquitination. This Bos taurus (Bovine) protein is Protein sprouty homolog 2 (SPRY2).